A 166-amino-acid chain; its full sequence is Ribonuclease H (166 aa).

Residues 5–147 enclose the RNase H type-1 domain; that stretch reads PRKRVALFTD…VDREARRQAQ (143 aa). Residues D14, E52, D74, and D139 each contribute to the Mg(2+) site. Positions 128–166 are disordered; sequence GHTGHPENERVDREARRQAQSQAKTPCPPQAPTLFHEEA. Residues 131 to 144 are compositionally biased toward basic and acidic residues; it reads GHPENERVDREARR.

The protein belongs to the RNase H family. In terms of assembly, monomer. It depends on Mg(2+) as a cofactor.

The protein localises to the cytoplasm. The enzyme catalyses Endonucleolytic cleavage to 5'-phosphomonoester.. Endonuclease that specifically degrades the RNA of RNA-DNA hybrids. This Thermus thermophilus (strain ATCC BAA-163 / DSM 7039 / HB27) protein is Ribonuclease H.